The following is a 508-amino-acid chain: Glutamyl-tRNA(Gln) amidotransferase subunit B, mitochondrial (508 aa).

The protein belongs to the GatB/GatE family. GatB subfamily. Subunit of the heterotrimeric GatFAB amidotransferase (AdT) complex, composed of A, B and F subunits.

It is found in the mitochondrion. It catalyses the reaction L-glutamyl-tRNA(Gln) + L-glutamine + ATP + H2O = L-glutaminyl-tRNA(Gln) + L-glutamate + ADP + phosphate + H(+). In terms of biological role, allows the formation of correctly charged Gln-tRNA(Gln) through the transamidation of misacylated Glu-tRNA(Gln) in the mitochondria. The reaction takes place in the presence of glutamine and ATP through an activated gamma-phospho-Glu-tRNA(Gln). This Scheffersomyces stipitis (strain ATCC 58785 / CBS 6054 / NBRC 10063 / NRRL Y-11545) (Yeast) protein is Glutamyl-tRNA(Gln) amidotransferase subunit B, mitochondrial.